The sequence spans 624 residues: Kelch-like ECH-associated protein 1 (624 aa).

The tract at residues 1–27 (MQPEPRPSGAGAHTQFLPLRSQRPEGA) is disordered. Position 38 is an S-(2-succinyl)cysteine (Cys-38). One can recognise a BTB domain in the interval 77 to 149 (CDVTLQVKYE…AYTASISMGE (73 aa)). Arg-135 participates in a covalent cross-link: N5-[4-(S-L-cysteinyl)-5-methyl-1H-imidazol-2-yl]-L-ornithine (Arg-Cys) (interchain with C-151 in KEAP1). An S-(2-succinyl)cysteine mark is found at Cys-151 and Cys-241. Residue Cys-151 is modified to S-(2,3-dicarboxypropyl)cysteine; alternate. Position 151 is an S-nitrosocysteine; alternate (Cys-151). Cys-151 participates in a covalent cross-link: N5-[4-(S-L-cysteinyl)-5-methyl-1H-imidazol-2-yl]-L-ornithine (Cys-Arg) (interchain with R-135 in KEAP1). The 103-residue stretch at 184–286 (AIGIANFAEQ…TPHFLQMQLQ (103 aa)) folds into the BACK domain. Residues Cys-257 and Cys-273 each carry the S-(2,3-dicarboxypropyl)cysteine modification. An S-(2-succinyl)cysteine mark is found at Cys-288 and Cys-319. Position 288 is an S-(2,3-dicarboxypropyl)cysteine; alternate (Cys-288). Kelch repeat units follow at residues 327–372 (LIYT…VVGG), 373–423 (LLYA…VIDG), 424–470 (HIYA…VLNR), 471–517 (LLYA…VLHN), 519–564 (IYAA…VHQG), and 565–611 (RIYV…VTME). Cys-434 is subject to S-cGMP-cysteine. Cys-613 carries the S-(2-succinyl)cysteine modification.

The protein belongs to the KEAP1 family. Component of the BCR(KEAP1) E3 ubiquitin ligase complex, at least composed of 2 molecules of CUL3, 2 molecules of KEAP1, and RBX1. Interacts with NFE2L2/NRF2; the interaction is direct. Forms a ternary complex with NFE2L2/NRF2 and PGAM5. Interacts with (phosphorylated) SQSTM1/p62; the interaction is direct and inactivates the BCR(KEAP1) complex by sequestering it in inclusion bodies, promoting its degradation. Interacts with NFE2L1. Interacts with BPTF and PTMA. Interacts with MAP1LC3B. Interacts indirectly with ENC1. Interacts with SESN1 and SESN2. Interacts with HSP90AA1 and HSP90AB1. Interacts with PGCKA1; this interaction prevents the ubiquitination of KEAP1 by TRIM25, thus protecting KEAP1 protein from degradation. In terms of processing, non-enzymatic covalent modifications of reactive cysteines by electrophile metabolites inactivate the BCR(KEAP1) complex. Accumulation of fumarate promotes the formation of cysteine S-succination (S-(2-succinyl)cysteine), leading to inactivate the BCR(KEAP1) complex and promote NFE2L2/NRF2 nuclear accumulation and activation. Nitric oxide-dependent 8-Nitro-cGMP formation promotes cysteine guanylation (S-cGMP-cysteine), leading to NFE2L2/NRF2 nuclear accumulation and activation. Itaconate, an anti-inflammatory metabolite generated in response to lipopolysaccharide, alkylates cysteines, activating NFE2L2/NRF2. Methylglyoxal, a reactive metabolite that accumulates when the glycolytic enzyme PGK1 is inhibited, promotes formation of a methylimidazole cross-link between proximal Cys-151 and Arg-135 on another KEAP1 molecule, resulting in an inactive dimer that inactivates the BCR(KEAP1) complex. Degraded via a proteasomal-independent process during selective autophagy: interaction with phosphorylated SQSTM1/p62 sequesters KEAP1 in inclusion bodies, leading to its degradation. Post-translationally, auto-ubiquitinated by the BCR(KEAP1) complex. Quinone-induced oxidative stress, but not sulforaphane, increases its ubiquitination. Ubiquitination and subsequent degradation is most pronounced following prolonged exposure of cells to oxidative stress, particularly in glutathione-deficient cells that are highly susceptible to oxidative stress. Deubiquitinated by USP25; leading to stabilization. Ubiquitinated by TRIM25; leading to degradation upon ER stress.

It localises to the cytoplasm. Its subcellular location is the nucleus. It participates in protein modification; protein ubiquitination. With respect to regulation, ubiquitin ligase activity of the BCR(KEAP1) complex is inhibited by oxidative stress and electrophile metabolites such as sulforaphane. Electrophile metabolites react with reactive cysteine residues in KEAP1 and trigger non-enzymatic covalent modifications of these cysteine residues, leading to inactivate the ubiquitin ligase activity of the BCR(KEAP1) complex. Selective autophagy also inactivates the BCR(KEAP1) complex via interaction between KEAP1 and SQSTM1/p62, which sequesters the complex in inclusion bodies and promotes its degradation. Functionally, substrate-specific adapter of a BCR (BTB-CUL3-RBX1) E3 ubiquitin ligase complex that regulates the response to oxidative stress by targeting NFE2L2/NRF2 for ubiquitination. KEAP1 acts as a key sensor of oxidative and electrophilic stress: in normal conditions, the BCR(KEAP1) complex mediates ubiquitination and degradation of NFE2L2/NRF2, a transcription factor regulating expression of many cytoprotective genes. In response to oxidative stress, different electrophile metabolites trigger non-enzymatic covalent modifications of highly reactive cysteine residues in KEAP1, leading to inactivate the ubiquitin ligase activity of the BCR(KEAP1) complex, promoting NFE2L2/NRF2 nuclear accumulation and expression of phase II detoxifying enzymes. In response to selective autophagy, KEAP1 is sequestered in inclusion bodies following its interaction with SQSTM1/p62, leading to inactivation of the BCR(KEAP1) complex and activation of NFE2L2/NRF2. The BCR(KEAP1) complex also mediates ubiquitination of SQSTM1/p62, increasing SQSTM1/p62 sequestering activity and degradation. The BCR(KEAP1) complex also targets BPTF and PGAM5 for ubiquitination and degradation by the proteasome. The sequence is that of Kelch-like ECH-associated protein 1 from Sus scrofa (Pig).